The sequence spans 295 residues: Fructose-bisphosphate aldolase class 1 (295 aa).

The Proton acceptor role is filled by E176. The Schiff-base intermediate with dihydroxyacetone-P role is filled by K213.

This sequence belongs to the class I fructose-bisphosphate aldolase family.

It catalyses the reaction beta-D-fructose 1,6-bisphosphate = D-glyceraldehyde 3-phosphate + dihydroxyacetone phosphate. It participates in carbohydrate degradation; glycolysis; D-glyceraldehyde 3-phosphate and glycerone phosphate from D-glucose: step 4/4. In Fusobacterium nucleatum subsp. nucleatum (strain ATCC 25586 / DSM 15643 / BCRC 10681 / CIP 101130 / JCM 8532 / KCTC 2640 / LMG 13131 / VPI 4355), this protein is Fructose-bisphosphate aldolase class 1.